Consider the following 115-residue polypeptide: Divalent-cation tolerance protein CutA (115 aa).

Cu cation is bound by residues Cys-19, His-86, and His-87.

It belongs to the CutA family. In terms of assembly, homotrimer. Cu cation is required as a cofactor.

The protein resides in the cytoplasm. Functionally, involved in resistance toward heavy metals. The sequence is that of Divalent-cation tolerance protein CutA from Citrobacter koseri (strain ATCC BAA-895 / CDC 4225-83 / SGSC4696).